A 313-amino-acid polypeptide reads, in one-letter code: MTRDELKQKRIGVLMGGLSAERDVSLKSGMAVHQALLAMGYDSTALDVRHNVALILREEKIDLAFIALHGRYGEDGCIQGLLELMQIPYTGSGVLASALAMHKLYSKQAFAAAGLTITPYATVRQGDRCNAEQLPFGLPVVVKPVQEGSSVGVTIVKKPEDLQAALDEAFRYDTLVLVEKYIKGQEVQVGILANQPIGAIEIVPKNEFYDFEAKYSDGMAEHIFPARLAEPLYQKVQQQGLQAHQALGCDGYCRVDFLVTENGDCYLLEVNTLPGMTALSLLPEIAQKGAGLSFEALVEQIACSAALKTGQAG.

The region spanning 107–303 (KQAFAAAGLT…FEALVEQIAC (197 aa)) is the ATP-grasp domain. 135–188 (PFGLPVVVKPVQEGSSVGVTIVKKPEDLQAALDEAFRYDTLVLVEKYIKGQEVQ) provides a ligand contact to ATP. The Mg(2+) site is built by Asp-256, Glu-269, and Asn-271.

This sequence belongs to the D-alanine--D-alanine ligase family. Requires Mg(2+) as cofactor. Mn(2+) serves as cofactor.

Its subcellular location is the cytoplasm. It carries out the reaction 2 D-alanine + ATP = D-alanyl-D-alanine + ADP + phosphate + H(+). Its pathway is cell wall biogenesis; peptidoglycan biosynthesis. Functionally, cell wall formation. The sequence is that of D-alanine--D-alanine ligase from Trichlorobacter lovleyi (strain ATCC BAA-1151 / DSM 17278 / SZ) (Geobacter lovleyi).